Consider the following 169-residue polypeptide: Lipoprotein signal peptidase (169 aa).

A run of 2 helical transmembrane segments spans residues 56–76 and 84–104; these read FLPP…VIIY and QPLF…NLID. Residues Asp113 and Asp139 contribute to the active site. Residues 132-152 traverse the membrane as a helical segment; that stretch reads WPIFNIADSAITIGACMLIIF.

This sequence belongs to the peptidase A8 family.

It localises to the cell inner membrane. The catalysed reaction is Release of signal peptides from bacterial membrane prolipoproteins. Hydrolyzes -Xaa-Yaa-Zaa-|-(S,diacylglyceryl)Cys-, in which Xaa is hydrophobic (preferably Leu), and Yaa (Ala or Ser) and Zaa (Gly or Ala) have small, neutral side chains.. It participates in protein modification; lipoprotein biosynthesis (signal peptide cleavage). In terms of biological role, this protein specifically catalyzes the removal of signal peptides from prolipoproteins. The sequence is that of Lipoprotein signal peptidase from Chlorobium phaeovibrioides (strain DSM 265 / 1930) (Prosthecochloris vibrioformis (strain DSM 265)).